A 280-amino-acid chain; its full sequence is Pantothenate synthetase (280 aa).

Met-26–His-33 is an ATP binding site. The active-site Proton donor is His-33. Gln-57 provides a ligand contact to (R)-pantoate. Gln-57 contacts beta-alanine. Gly-147–Asp-150 is an ATP binding site. Residue Gln-153 participates in (R)-pantoate binding. Position 184 to 187 (Leu-184 to Arg-187) interacts with ATP.

Belongs to the pantothenate synthetase family. In terms of assembly, homodimer.

It localises to the cytoplasm. The enzyme catalyses (R)-pantoate + beta-alanine + ATP = (R)-pantothenate + AMP + diphosphate + H(+). It participates in cofactor biosynthesis; (R)-pantothenate biosynthesis; (R)-pantothenate from (R)-pantoate and beta-alanine: step 1/1. Catalyzes the condensation of pantoate with beta-alanine in an ATP-dependent reaction via a pantoyl-adenylate intermediate. In Verminephrobacter eiseniae (strain EF01-2), this protein is Pantothenate synthetase.